The sequence spans 232 residues: Ribose-5-phosphate isomerase A (232 aa).

Substrate is bound by residues threonine 31–threonine 34, aspartate 87–aspartate 90, and lysine 100–glycine 103. Residue glutamate 109 is the Proton acceptor of the active site. Position 127 (lysine 127) interacts with substrate.

It belongs to the ribose 5-phosphate isomerase family. As to quaternary structure, homodimer.

It carries out the reaction aldehydo-D-ribose 5-phosphate = D-ribulose 5-phosphate. Its pathway is carbohydrate degradation; pentose phosphate pathway; D-ribose 5-phosphate from D-ribulose 5-phosphate (non-oxidative stage): step 1/1. Its function is as follows. Catalyzes the reversible conversion of ribose-5-phosphate to ribulose 5-phosphate. The chain is Ribose-5-phosphate isomerase A from Bifidobacterium adolescentis (strain ATCC 15703 / DSM 20083 / NCTC 11814 / E194a).